A 287-amino-acid chain; its full sequence is Pyridoxal kinase PdxY (287 aa).

Residues Ser-9 and 44 to 45 (TQ) each bind substrate. ATP-binding positions include Asp-111, Ala-143, Glu-148, Lys-181, and 208 to 211 (RPLV). Position 223 (Asp-223) interacts with substrate.

The protein belongs to the pyridoxine kinase family. PdxY subfamily. In terms of assembly, homodimer. Requires Mg(2+) as cofactor.

The enzyme catalyses pyridoxal + ATP = pyridoxal 5'-phosphate + ADP + H(+). The protein operates within cofactor metabolism; pyridoxal 5'-phosphate salvage; pyridoxal 5'-phosphate from pyridoxal: step 1/1. Pyridoxal kinase involved in the salvage pathway of pyridoxal 5'-phosphate (PLP). Catalyzes the phosphorylation of pyridoxal to PLP. In Photorhabdus laumondii subsp. laumondii (strain DSM 15139 / CIP 105565 / TT01) (Photorhabdus luminescens subsp. laumondii), this protein is Pyridoxal kinase PdxY.